A 366-amino-acid polypeptide reads, in one-letter code: Uroporphyrinogen decarboxylase (366 aa).

Residues 28 to 32 (RQAGR), D78, Y160, T215, and H333 contribute to the substrate site.

The protein belongs to the uroporphyrinogen decarboxylase family. As to quaternary structure, homodimer.

It is found in the cytoplasm. The catalysed reaction is uroporphyrinogen III + 4 H(+) = coproporphyrinogen III + 4 CO2. The protein operates within porphyrin-containing compound metabolism; protoporphyrin-IX biosynthesis; coproporphyrinogen-III from 5-aminolevulinate: step 4/4. Its function is as follows. Catalyzes the decarboxylation of four acetate groups of uroporphyrinogen-III to yield coproporphyrinogen-III. In Paraburkholderia phytofirmans (strain DSM 17436 / LMG 22146 / PsJN) (Burkholderia phytofirmans), this protein is Uroporphyrinogen decarboxylase.